A 521-amino-acid chain; its full sequence is Zinc finger CCCH domain-containing protein 45 (521 aa).

Disordered regions lie at residues 28–60 (TEDS…GFEG), 142–185 (TPAI…PLCS), and 296–319 (SRSF…ISPP). Positions 34–43 (NVASQPQRHS) are enriched in polar residues. Residues 159–168 (EESSNSKVES) are compositionally biased toward low complexity. Residues 170 to 185 (VTANKQGQLETKPLCS) are compositionally biased toward polar residues. The C3H1-type zinc finger occupies 469 to 497 (NKIHQQCIYFGTANGCNMGDSCTYVHDRY).

The polypeptide is Zinc finger CCCH domain-containing protein 45 (Arabidopsis thaliana (Mouse-ear cress)).